The following is a 343-amino-acid chain: uncharacterized protein (343 aa).

This is an uncharacterized protein from Nostoc sp. (strain PCC 7120 / SAG 25.82 / UTEX 2576).